The primary structure comprises 307 residues: Alginate lyase (307 aa).

Positions Met1 to Ala20 are cleaved as a signal peptide.

This sequence belongs to the polysaccharide lyase 7 family.

It is found in the secreted. The catalysed reaction is Eliminative cleavage of alginate to give oligosaccharides with 4-deoxy-alpha-L-erythro-hex-4-enuronosyl groups at their non-reducing ends and beta-D-mannuronate at their reducing end.. Degrades alginates that contain guluronic acid. The polypeptide is Alginate lyase (alyA) (Klebsiella pneumoniae).